The sequence spans 225 residues: Urease accessory protein UreE (225 aa).

Composition is skewed to basic and acidic residues over residues His189–Gly202 and Asn212–Arg225. Positions His189–Arg225 are disordered.

This sequence belongs to the UreE family.

The protein resides in the cytoplasm. In terms of biological role, involved in urease metallocenter assembly. Binds nickel. Probably functions as a nickel donor during metallocenter assembly. This chain is Urease accessory protein UreE, found in Edwardsiella ictaluri.